Reading from the N-terminus, the 162-residue chain is Ribosome maturation factor RimP (162 aa).

It belongs to the RimP family.

Its subcellular location is the cytoplasm. Its function is as follows. Required for maturation of 30S ribosomal subunits. The sequence is that of Ribosome maturation factor RimP from Leptospira interrogans serogroup Icterohaemorrhagiae serovar copenhageni (strain Fiocruz L1-130).